A 184-amino-acid chain; its full sequence is Mitochondrial import inner membrane translocase subunit TIM22 (184 aa).

The interval 1-26 is disordered; that stretch reads MSLWGVYTGPQPPKKPLQEMTQEEQA. Disulfide bonds link C40-C118 and C137-C156. 2 helical membrane-spanning segments follow: residues 45–65 and 151–171; these read VMAGVSGFALGGFFGLFMASM and AALVGCAGFAAFSLAIDMYLN.

The protein belongs to the Tim17/Tim22/Tim23 family. As to quaternary structure, component of the TIM22 complex, whose core is composed of TIM22 and TIM54, associated with the 70 kDa heterohexamer composed of TIM9 and TIM10 (or TIM8 and TIM13).

It localises to the mitochondrion inner membrane. In terms of biological role, essential core component of the TIM22 complex, a complex that mediates the import and insertion of multi-pass transmembrane proteins into the mitochondrial inner membrane. In the TIM22 complex, it constitutes the voltage-activated and signal-gated channel. Forms a twin-pore translocase that uses the membrane potential as external driving force in 2 voltage-dependent steps. The chain is Mitochondrial import inner membrane translocase subunit TIM22 from Candida albicans (strain SC5314 / ATCC MYA-2876) (Yeast).